The sequence spans 905 residues: Core protein VP3 (905 aa).

The protein belongs to the orbivirus VP3 family.

It localises to the virion. Functionally, the VP3 protein is one of the five proteins (with VP1, VP4, VP6 and VP7) which form the inner capsid of the virus. The chain is Core protein VP3 (Segment-3) from African horse sickness virus 6 (AHSV-6).